The primary structure comprises 157 residues: Phosphopantetheine adenylyltransferase (157 aa).

T10 contributes to the substrate binding site. Residues 10–11 and H18 contribute to the ATP site; that span reads TF. Residues K42, L74, and R88 each contribute to the substrate site. ATP is bound by residues 89-91, E99, and 124-130; these read GLR and NAFISSS.

Belongs to the bacterial CoaD family. As to quaternary structure, homohexamer. Mg(2+) serves as cofactor.

The protein localises to the cytoplasm. The catalysed reaction is (R)-4'-phosphopantetheine + ATP + H(+) = 3'-dephospho-CoA + diphosphate. Its pathway is cofactor biosynthesis; coenzyme A biosynthesis; CoA from (R)-pantothenate: step 4/5. Its function is as follows. Reversibly transfers an adenylyl group from ATP to 4'-phosphopantetheine, yielding dephospho-CoA (dPCoA) and pyrophosphate. This chain is Phosphopantetheine adenylyltransferase, found in Helicobacter pylori (strain J99 / ATCC 700824) (Campylobacter pylori J99).